We begin with the raw amino-acid sequence, 339 residues long: DNA-directed RNA polymerase subunit alpha (339 aa).

An alpha N-terminal domain (alpha-NTD) region spans residues 1–235 (MVLQKNWQSL…DQLQLFINFD (235 aa)). Residues 251 to 339 (FNRNLLRKVD…DLAKRLDEPF (89 aa)) form an alpha C-terminal domain (alpha-CTD) region.

It belongs to the RNA polymerase alpha chain family. Homodimer. The RNAP catalytic core consists of 2 alpha, 1 beta, 1 beta' and 1 omega subunit. When a sigma factor is associated with the core the holoenzyme is formed, which can initiate transcription.

It carries out the reaction RNA(n) + a ribonucleoside 5'-triphosphate = RNA(n+1) + diphosphate. Its function is as follows. DNA-dependent RNA polymerase catalyzes the transcription of DNA into RNA using the four ribonucleoside triphosphates as substrates. This is DNA-directed RNA polymerase subunit alpha from Gluconacetobacter diazotrophicus (strain ATCC 49037 / DSM 5601 / CCUG 37298 / CIP 103539 / LMG 7603 / PAl5).